Here is a 200-residue protein sequence, read N- to C-terminus: Probable GTP-binding protein EngB (200 aa).

The region spanning 22 to 199 (GLDEIALAGR…KDWIQARLYE (178 aa)) is the EngB-type G domain. GTP contacts are provided by residues 30 to 37 (GRSNVGKS), 57 to 61 (GKTQT), 78 to 81 (DVPG), 145 to 148 (TKMD), and 178 to 180 (FSS). Positions 37 and 59 each coordinate Mg(2+).

The protein belongs to the TRAFAC class TrmE-Era-EngA-EngB-Septin-like GTPase superfamily. EngB GTPase family. It depends on Mg(2+) as a cofactor.

Necessary for normal cell division and for the maintenance of normal septation. This Lactobacillus delbrueckii subsp. bulgaricus (strain ATCC 11842 / DSM 20081 / BCRC 10696 / JCM 1002 / NBRC 13953 / NCIMB 11778 / NCTC 12712 / WDCM 00102 / Lb 14) protein is Probable GTP-binding protein EngB.